Here is a 1344-residue protein sequence, read N- to C-terminus: Period circadian protein homolog 2 (1344 aa).

Disordered stretches follow at residues 1 to 21 (MDCI…PEQQ) and 42 to 112 (EYSG…NGKD). Over residues 10-21 (YSSTEEQNPEQQ) the composition is skewed to polar residues. Over residues 78 to 89 (SSGSSGNDFSGN) the composition is skewed to low complexity. Residues 99-111 (HDSHGHESDENGK) are compositionally biased toward basic and acidic residues. The Nuclear export signal 1 signature appears at 161-170 (LLKTLQELKA). One can recognise a PAS 1 domain in the interval 231-298 (ITSEYIMKNA…FYTSTTPYRL (68 aa)). The LXXLL motif lies at 358–362 (LCCVL). The PAS 2 domain maps to 371-437 (YEAPRIPPDK…MLAIHKKILQ (67 aa)). A PAC domain is found at 445–488 (YSPIRFCTRNGDYITMDTSWSSFINPWSRKVSFIIGRHKVRTGP). Residues 512–521 (ITEQIYRLLL) carry the Nuclear export signal 2 motif. 5 disordered regions span residues 531 to 609 (GYGS…QVKD), 661 to 686 (AKRK…NAIQ), 823 to 894 (LQDK…WSPS), 1038 to 1065 (TETR…PLFQ), and 1107 to 1126 (TTDA…MDAQ). Over residues 549–559 (SSSDSTGNNND) the composition is skewed to low complexity. 2 stretches are compositionally biased toward basic and acidic residues: residues 560-573 (DTQK…DARK) and 583-597 (TENK…EPSA). Positions 667–684 (PSSSVNSSVHEQKASVNA) are enriched in polar residues. Positions 825-836 (DKPKGRPGERGG) are enriched in basic and acidic residues. The short motif at 851 to 865 (KKSGKNRKSKRIKPQ) is the Nuclear localization signal element. Over residues 852–862 (KSGKNRKSKRI) the composition is skewed to basic residues. Composition is skewed to polar residues over residues 865 to 875 (QESSDSTTSGT), 885 to 894 (GLNTTAWSPS), and 1045 to 1059 (SRSC…QDQA). The LXXLL signature appears at 1138-1142 (LDILL). Residues 1149–1172 (GTGSASSGSGVSAAAESLGSGSNG) show a composition bias toward low complexity. The interval 1149–1197 (GTGSASSGSGVSAAAESLGSGSNGCDMSGSRTGSSETSHTSKYFGSIDS) is disordered. The span at 1177–1197 (GSRTGSSETSHTSKYFGSIDS) shows a compositional bias: polar residues. Residues 1244–1344 (SRDLETVLKE…PLSQVNEEQT (101 aa)) are CRY binding domain.

As to quaternary structure, component of the circadian clock oscillator which includes the CRY proteins, CLOCK or NPAS2, BMAL1 or BMAL2, CSNK1E, and the PER proteins. Interacts directly with PER3, and through a C-terminal domain, with CRY1 and CRY2.

It localises to the nucleus. The protein resides in the cytoplasm. In terms of biological role, transcriptional repressor which forms a core component of the circadian clock. The circadian clock, an internal time-keeping system, regulates various physiological processes through the generation of approximately 24 hour circadian rhythms in gene expression, which are translated into rhythms in metabolism and behavior. It is derived from the Latin roots 'circa' (about) and 'diem' (day) and acts as an important regulator of a wide array of physiological functions including metabolism, sleep, body temperature, blood pressure, endocrine, immune, cardiovascular, and renal function. Consists of two major components: the central clock, residing in the suprachiasmatic nucleus (SCN) of the brain, and the peripheral clocks that are present in nearly every tissue and organ system. Both the central and peripheral clocks can be reset by environmental cues, also known as Zeitgebers (German for 'timegivers'). The predominant Zeitgeber for the central clock is light, which is sensed by retina and signals directly to the SCN. The central clock entrains the peripheral clocks through neuronal and hormonal signals, body temperature and feeding-related cues, aligning all clocks with the external light/dark cycle. Circadian rhythms allow an organism to achieve temporal homeostasis with its environment at the molecular level by regulating gene expression to create a peak of protein expression once every 24 hours to control when a particular physiological process is most active with respect to the solar day. Transcription and translation of core clock components (CLOCK, NPAS2, BMAL1, BMAL2, PER1, PER2, PER3, CRY1 and CRY2) plays a critical role in rhythm generation, whereas delays imposed by post-translational modifications (PTMs) are important for determining the period (tau) of the rhythms (tau refers to the period of a rhythm and is the length, in time, of one complete cycle). A diurnal rhythm is synchronized with the day/night cycle, while the ultradian and infradian rhythms have a period shorter and longer than 24 hours, respectively. Disruptions in the circadian rhythms contribute to the pathology of cardiovascular diseases, cancer, metabolic syndrome and aging. A transcription/translation feedback loop (TTFL) forms the core of the molecular circadian clock mechanism. Transcription factors, CLOCK or NPAS2 and BMAL1 or BMAL2, form the positive limb of the feedback loop, act in the form of a heterodimer and activate the transcription of core clock genes and clock-controlled genes (involved in key metabolic processes), harboring E-box elements (5'-CACGTG-3') within their promoters. The core clock genes: PER1/2/3 and CRY1/2 which are transcriptional repressors form the negative limb of the feedback loop and interact with the CLOCK|NPAS2-BMAL1|BMAL2 heterodimer inhibiting its activity and thereby negatively regulating their own expression. This heterodimer also activates nuclear receptors NR1D1/2 and RORA/B/G, which form a second feedback loop and which activate and repress BMAL1 transcription, respectively. PER1 and PER2 proteins transport CRY1 and CRY2 into the nucleus with appropriate circadian timing, but also contribute directly to repression of clock-controlled target genes through interaction with several classes of RNA-binding proteins, helicases and others transcriptional repressors. PER appears to regulate circadian control of transcription by at least three different modes. First, interacts directly with the CLOCK-BMAL1 at the tail end of the nascent transcript peak to recruit complexes containing the SIN3-HDAC that remodel chromatin to repress transcription. Second, brings H3K9 methyltransferases such as SUV39H1 and SUV39H2 to the E-box elements of the circadian target genes, like PER2 itself or PER1. The recruitment of each repressive modifier to the DNA seems to be very precisely temporally orchestrated by the large PER complex, the deacetylases acting before than the methyltransferases. Additionally, large PER complexes are also recruited to the target genes 3' termination site through interactions with RNA-binding proteins and helicases that may play a role in transcription termination to regulate transcription independently of CLOCK-BMAL1 interactions. The polypeptide is Period circadian protein homolog 2 (PER2) (Gallus gallus (Chicken)).